The following is a 515-amino-acid chain: MYTLKEGIDFYIEPMQNKKVTVFDTTLRDGEQTPGVSLTSSQKLEISRQLDKLGVDIIEAGFPISSEGDKESVKSISNAGLETTVCGLARVLKKDIDACFESDVGLVHTFVPTSDVQRIYTIKKSQEEVIQLAVEAVQYIKDHGLKCMFSAMDATRTDPAYLIEVFKAVQEAGCDIINVPDTVGVMVPSAMYRQIKDIAAEITIPIDVHCHNDFGLAVANSLMAVEAGASQVQVTINGIGERAGNADLAQTVMSLASIYGIKTNIRTEYLVETSKMIENYTGIRLPPNTPVVGQNAFSHESGIHSQGVLEKSDTFEPGIMTPEMVGHRRRIVLGKHTGKHAVKQSLESAGVKTSENQLDEIVLRIKEIANKGKQITDADLYAVASAVLGKASSEEELIKLKEVSVMTGNILTPTAVVKADIEGKEIIAAKTGVGPVDAALKAVRDILGESNHFRLQEFRIDAITGGADALADVYIGLENEKGRIVTARSANPDIVMASVEALINAMNLLYKKEKS.

The Pyruvate carboxyltransferase domain maps to 20 to 271 (VTVFDTTLRD…KTNIRTEYLV (252 aa)). The a divalent metal cation site is built by Asp29, His209, His211, and Asn245.

The protein belongs to the alpha-IPM synthase/homocitrate synthase family. As to quaternary structure, homodimer. Requires a divalent metal cation as cofactor.

The enzyme catalyses 3-methyl-2-oxobutanoate + acetyl-CoA + H2O = (2S)-2-isopropylmalate + CoA + H(+). It participates in amino-acid biosynthesis; L-leucine biosynthesis; L-leucine from 3-methyl-2-oxobutanoate: step 1/4. Catalyzes the condensation of the acetyl group of acetyl-CoA with 3-methyl-2-oxobutanoate (2-oxoisovalerate) to form 3-carboxy-3-hydroxy-4-methylpentanoate (2-isopropylmalate). This is Probable 2-isopropylmalate synthase (leuA) from Methanosarcina acetivorans (strain ATCC 35395 / DSM 2834 / JCM 12185 / C2A).